We begin with the raw amino-acid sequence, 304 residues long: ATP synthase gamma chain (304 aa).

It belongs to the ATPase gamma chain family. As to quaternary structure, F-type ATPases have 2 components, CF(1) - the catalytic core - and CF(0) - the membrane proton channel. CF(1) has five subunits: alpha(3), beta(3), gamma(1), delta(1), epsilon(1). CF(0) has three main subunits: a, b and c.

The protein resides in the cell membrane. Functionally, produces ATP from ADP in the presence of a proton gradient across the membrane. The gamma chain is believed to be important in regulating ATPase activity and the flow of protons through the CF(0) complex. The chain is ATP synthase gamma chain from Chloroherpeton thalassium (strain ATCC 35110 / GB-78).